We begin with the raw amino-acid sequence, 574 residues long: Glycine--tRNA ligase (574 aa).

Substrate contacts are provided by Arg-96 and Glu-162. ATP is bound by residues Arg-194–Glu-196, Ile-204–Phe-209, Glu-327–Cys-328, and Gly-450–Arg-453. Phe-209–Glu-213 contacts substrate. Glu-446 to Gly-450 is a binding site for substrate.

This sequence belongs to the class-II aminoacyl-tRNA synthetase family.

The protein localises to the cytoplasm. The catalysed reaction is tRNA(Gly) + glycine + ATP = glycyl-tRNA(Gly) + AMP + diphosphate. In terms of biological role, catalyzes the attachment of glycine to tRNA(Gly). The polypeptide is Glycine--tRNA ligase (Methanococcus maripaludis (strain DSM 14266 / JCM 13030 / NBRC 101832 / S2 / LL)).